The following is a 183-amino-acid chain: MNLSAKTVVVIAIGAALYGIGGLPMFGIPVFANTTLKPAMAVLALFSVLYGPIVGFLVGFIGHWVTDLFAGWGVWLTWILGSGIVGMIIGLFPILTKRRIEVGLFDKKDFFIFVVLAFVGNVIGYGTSAFLDTVLYAEPFTKVFAQLCIIAAGNTVLIAVVGYFILTNLAKRKKQSTHLTEAQ.

5 consecutive transmembrane segments (helical) span residues 8 to 28, 41 to 61, 74 to 94, 110 to 130, and 147 to 167; these read VVVI…MFGI, AVLA…VGFI, VWLT…LFPI, FFIF…TSAF, and LCII…FILT.

It belongs to the UPF0397 family.

It localises to the cell membrane. This chain is UPF0397 protein VSAL_I1988, found in Aliivibrio salmonicida (strain LFI1238) (Vibrio salmonicida (strain LFI1238)).